A 428-amino-acid polypeptide reads, in one-letter code: Histone-lysine N-methyltransferase SMYD3 (428 aa).

Position 1 is an N-acetylmethionine (Met-1). Residues 4-240 (LKVEKFATAK…VGEELTICYL (237 aa)) enclose the SET domain. S-adenosyl-L-methionine is bound at residue 14–16 (RGN). Phosphothreonine is present on Thr-22. Cys-49, Cys-52, Cys-62, Cys-65, Cys-71, Cys-75, His-83, and Cys-87 together coordinate Zn(2+). The segment at 49–87 (CDRCLLGKEKLMRCSQCRVAKYCSAKCQKKAWPDHKREC) adopts an MYND-type zinc-finger fold. S-adenosyl-L-methionine is bound by residues Tyr-124, Asn-132, Asn-181, 205 to 206 (NH), Tyr-239, and Phe-259. The interval 272–428 (DADMLTGDEQ…EECDANIRAS (157 aa)) is C-terminal domain; essential for histone methyltransferase activity, nuclear localization and mediates interaction with HSP90AA1.

The protein belongs to the class V-like SAM-binding methyltransferase superfamily. Histone-lysine methyltransferase family. In terms of assembly, interacts with HSPCA. Interacts with HELZ. Interacts with POLR2A; the interaction may be indirect and may be mediated by HELZ. Interacts with HSP90AA1; this interaction enhances SMYD3 histone-lysine N-methyltransferase. In terms of tissue distribution, expressed in skeletal muscles and testis. Overexpressed in a majority of colorectal and hepatocellular carcinomas.

It is found in the cytoplasm. Its subcellular location is the nucleus. It catalyses the reaction L-lysyl(4)-[histone H3] + 3 S-adenosyl-L-methionine = N(6),N(6),N(6)-trimethyl-L-lysyl(4)-[histone H3] + 3 S-adenosyl-L-homocysteine + 3 H(+). Histone methyltransferase activity strongly stimulated by HSPCA. Functionally, histone methyltransferase. Specifically methylates 'Lys-4' of histone H3, inducing di- and tri-methylation, but not monomethylation. Also methylates 'Lys-5' of histone H4. Plays an important role in transcriptional activation as a member of an RNA polymerase complex. Binds DNA containing 5'-CCCTCC-3' or 5'-GAGGGG-3' sequences. In Homo sapiens (Human), this protein is Histone-lysine N-methyltransferase SMYD3 (SMYD3).